We begin with the raw amino-acid sequence, 522 residues long: Sensory neuron membrane protein 1 (522 aa).

Topologically, residues 1–11 are cytoplasmic; sequence MQLAKPLKYAA. The chain crosses the membrane as a helical span at residues 12 to 32; the sequence is ISGIVAFVGLMFGWVIFPAIL. The Extracellular segment spans residues 33–458; it reads KSQLKKEMAL…SQLFIPKRVV (426 aa). 3 N-linked (GlcNAc...) asparagine glycosylation sites follow: N67, N105, and N229. 3 disulfide bridges follow: C268-C333, C297-C352, and C335-C341. N440 carries an N-linked (GlcNAc...) asparagine glycan. A helical membrane pass occupies residues 459–479; it reads SVVCWCMISFGSLGVIAAVIF. The Cytoplasmic segment spans residues 480–522; that stretch reads HFKGDIMHLAVAGDNSVSKIKPENDENKEVGVMGQNQEPAKVM. The interval 500 to 522 is disordered; the sequence is KPENDENKEVGVMGQNQEPAKVM. Over residues 513-522 the composition is skewed to polar residues; the sequence is GQNQEPAKVM.

This sequence belongs to the CD36 family. As to expression, principal component of the olfactory cilia membrane. Detected in both male and female antennae but not present in leg, abdomen, thorax or head.

It localises to the cell membrane. Plays an olfactory role that is not restricted to pheromone sensitivity. The protein is Sensory neuron membrane protein 1 of Bombyx mori (Silk moth).